We begin with the raw amino-acid sequence, 164 residues long: Respiratory growth induced protein 2 (164 aa).

It belongs to the RGI1 family.

The protein resides in the cytoplasm. Involved in the control of energetic metabolism and significantly contribute to cell fitness, especially under respiratory growth conditions. The protein is Respiratory growth induced protein 2 (RGI2) of Saccharomyces cerevisiae (strain JAY291) (Baker's yeast).